The following is a 478-amino-acid chain: Noelin-3 (478 aa).

An N-terminal signal peptide occupies residues 1 to 23 (MSAPLLKLGAVLSTMAMISNWMS). Asparagine 33, asparagine 95, asparagine 179, asparagine 299, and asparagine 465 each carry an N-linked (GlcNAc...) asparagine glycan. Residues 77–217 (CSRDAKSRQL…TRLRDCMKKL (141 aa)) are a coiled coil. The region spanning 218–470 (TCGKLMKITG…QVLFNVTLFH (253 aa)) is the Olfactomedin-like domain. A disulfide bridge links cysteine 219 with cysteine 401.

Peripherally associated with AMPAR complex. AMPAR complex consists of an inner core made of 4 pore-forming GluA/GRIA proteins (GRIA1, GRIA2, GRIA3 and GRIA4) and 4 major auxiliary subunits arranged in a twofold symmetry. One of the two pairs of distinct binding sites is occupied either by CNIH2, CNIH3 or CACNG2, CACNG3. The other harbors CACNG2, CACNG3, CACNG4, CACNG8 or GSG1L. This inner core of AMPAR complex is complemented by outer core constituents binding directly to the GluA/GRIA proteins at sites distinct from the interaction sites of the inner core constituents. Outer core constituents include at least PRRT1, PRRT2, CKAMP44/SHISA9, FRRS1L and NRN1. The proteins of the inner and outer core serve as a platform for other, more peripherally associated AMPAR constituents, including OLFM3. Alone or in combination, these auxiliary subunits control the gating and pharmacology of the AMPAR complex and profoundly impact their biogenesis and protein processing. Homodimer. Interacts with MYOC. Interacts with OLFM2. Expressed in the brain (at protein level). Also expressed in the retina, mainly in the ganglion cell layer and in the amacrine cell subregion of the inner nuclear layer. Expressed at high levels in the epithelial cells of the posterior iris and the ciliary body and, at lower levels, in the trabecular meshwork. Isoform 2 preferentially expressed in retina and brain, while isoform 1 preferentially expressed in the tissues of the eye angle.

The protein resides in the secreted. It is found in the synapse. The protein is Noelin-3 (Olfm3) of Rattus norvegicus (Rat).